Consider the following 265-residue polypeptide: Sulfur carrier protein FdhD (265 aa).

The active-site Cysteine persulfide intermediate is the Cys-107.

This sequence belongs to the FdhD family.

It is found in the cytoplasm. Required for formate dehydrogenase (FDH) activity. Acts as a sulfur carrier protein that transfers sulfur from IscS to the molybdenum cofactor prior to its insertion into FDH. This chain is Sulfur carrier protein FdhD, found in Staphylococcus aureus (strain JH9).